Here is a 58-residue protein sequence, read N- to C-terminus: UPF0434 protein NT01EI_2448 (58 aa).

The protein belongs to the UPF0434 family.

The sequence is that of UPF0434 protein NT01EI_2448 from Edwardsiella ictaluri (strain 93-146).